Reading from the N-terminus, the 349-residue chain is MPMPPDESALSLLPDHPLAAHNTFGIDARARYAARITHPAQFEALHRDARVATLPHLVLGGGSNVVFTRDFDGLVLLDEIAGRRVVRDDDDAWYVEAGGGENWHAFVGWTLEHGMAGLENLALIPGTVGAAPIQNIGAYGLEMNAYFDSLVAVELATGRSERFDAARCAFGYRDSFFKRDGRGRFAIVSVTFRLPKRWTPRLGYADVTRELEARGISPDAATPRDVFDAVVAIRRAKLPDPRELGNAGSFFKNPVIDRAQFDALHARAPGIVSYPQPDGRVKLAAGWLIDRCGWKGRALGAAAVHDRQALVLVNRGGATGADVLALARAIQHDVRTQFGVELEPEPVCL.

The FAD-binding PCMH-type domain maps to Gly-25–Arg-197. Arg-173 is an active-site residue. The Proton donor role is filled by Ser-249. Residue Glu-345 is part of the active site.

It belongs to the MurB family. FAD serves as cofactor.

It localises to the cytoplasm. The catalysed reaction is UDP-N-acetyl-alpha-D-muramate + NADP(+) = UDP-N-acetyl-3-O-(1-carboxyvinyl)-alpha-D-glucosamine + NADPH + H(+). Its pathway is cell wall biogenesis; peptidoglycan biosynthesis. Cell wall formation. This chain is UDP-N-acetylenolpyruvoylglucosamine reductase, found in Burkholderia multivorans (strain ATCC 17616 / 249).